A 387-amino-acid chain; its full sequence is tRNA pseudouridine synthase B (387 aa).

The Nucleophile role is filled by aspartate 43.

This sequence belongs to the pseudouridine synthase TruB family. Type 1 subfamily.

It catalyses the reaction uridine(55) in tRNA = pseudouridine(55) in tRNA. Functionally, responsible for synthesis of pseudouridine from uracil-55 in the psi GC loop of transfer RNAs. This chain is tRNA pseudouridine synthase B, found in Bifidobacterium longum subsp. infantis (strain ATCC 15697 / DSM 20088 / JCM 1222 / NCTC 11817 / S12).